Reading from the N-terminus, the 131-residue chain is Glutaredoxin arsenate reductase (131 aa).

Catalysis depends on nucleophile residues Cys-8 and Cys-80. 2 cysteine pairs are disulfide-bonded: Cys-8-Cys-80 and Cys-80-Cys-82.

It belongs to the low molecular weight phosphotyrosine protein phosphatase family. Homodimer.

The enzyme catalyses O-phospho-L-tyrosyl-[protein] + H2O = L-tyrosyl-[protein] + phosphate. It catalyses the reaction [glutaredoxin]-dithiol + arsenate + glutathione + H(+) = glutathionyl-S-S-[glutaredoxin] + arsenite + H2O. In terms of biological role, reduces arsenate [As(V)] to arsenite [As(III)] using glutathione and glutaredoxin as sources of reducing equivalents. GrxA is the most effective electron donor in vivo compared to other glutaredoxins. Constitutes the major arsenate reductase compared to ArsI1 and ArsI2. Also shows weak phosphatase activity toward p-nitrophenyl phosphate. This chain is Glutaredoxin arsenate reductase (arsC), found in Synechocystis sp. (strain ATCC 27184 / PCC 6803 / Kazusa).